We begin with the raw amino-acid sequence, 199 residues long: GTP-binding protein Di-Ras2 (199 aa).

GTP-binding positions include Gly-14–Ser-21, Arg-33–Thr-39, Asp-61–Ser-65, and Asn-121–Asp-124. Ser-35 carries the post-translational modification Phosphoserine. The Effector region signature appears at Tyr-36–Tyr-44. Phosphoserine is present on Ser-126. Ala-152–Lys-153 serves as a coordination point for GTP. Cys-196 carries the post-translational modification Cysteine methyl ester. Residue Cys-196 is the site of S-geranylgeranyl cysteine attachment. Positions Val-197–Met-199 are cleaved as a propeptide — removed in mature form.

It belongs to the small GTPase superfamily. Di-Ras family. In terms of processing, ubiquitinated by the ECS(ASB11) complex via 'Lys-11'-linked ubiquitin chains, leading to its degradation by the proteasome.

It is found in the cell membrane. It carries out the reaction GTP + H2O = GDP + phosphate + H(+). Functionally, displays low GTPase activity and exists predominantly in the GTP-bound form. This chain is GTP-binding protein Di-Ras2 (Diras2), found in Mus musculus (Mouse).